The sequence spans 121 residues: Dihydroneopterin aldolase (121 aa).

Substrate contacts are provided by Glu25 and Met114.

It belongs to the archaeal dihydroneopterin aldolase family. As to quaternary structure, homotetramer.

The catalysed reaction is 7,8-dihydroneopterin = 6-hydroxymethyl-7,8-dihydropterin + glycolaldehyde. Its pathway is cofactor biosynthesis; 5,6,7,8-tetrahydromethanopterin biosynthesis. Catalyzes the conversion of 7,8-dihydroneopterin (H2Neo) to 6-hydroxymethyl-7,8-dihydropterin (6-HMD). The polypeptide is Dihydroneopterin aldolase (Methanocaldococcus jannaschii (strain ATCC 43067 / DSM 2661 / JAL-1 / JCM 10045 / NBRC 100440) (Methanococcus jannaschii)).